A 159-amino-acid polypeptide reads, in one-letter code: uncharacterized protein (159 aa).

Positions 44, 124, and 128 each coordinate a divalent metal cation.

The protein belongs to the DinB family.

This is an uncharacterized protein from Bacillus subtilis (strain 168).